A 205-amino-acid chain; its full sequence is Shieldin complex subunit 1 (205 aa).

Component of the shieldin complex, consisting of SHLD1, SHLD2, SHLD3 and MAD2L2/REV7. Within the complex, SHLD2 forms a scaffold which interacts with a SHLD3-MAD2L2 subcomplex via its N-terminus, and with SHLD1 via its C-terminus. Interacts with ASTE1.

It localises to the chromosome. Its function is as follows. Component of the shieldin complex, which plays an important role in repair of DNA double-stranded breaks (DSBs). During G1 and S phase of the cell cycle, the complex functions downstream of TP53BP1 to promote non-homologous end joining (NHEJ) and suppress DNA end resection. Mediates various NHEJ-dependent processes including immunoglobulin class-switch recombination, and fusion of unprotected telomeres. The chain is Shieldin complex subunit 1 from Homo sapiens (Human).